Here is a 100-residue protein sequence, read N- to C-terminus: Urease subunit gamma (100 aa).

Belongs to the urease gamma subunit family. As to quaternary structure, heterotrimer of UreA (gamma), UreB (beta) and UreC (alpha) subunits. Three heterotrimers associate to form the active enzyme.

It localises to the cytoplasm. It carries out the reaction urea + 2 H2O + H(+) = hydrogencarbonate + 2 NH4(+). Its pathway is nitrogen metabolism; urea degradation; CO(2) and NH(3) from urea (urease route): step 1/1. The protein is Urease subunit gamma of Burkholderia thailandensis (strain ATCC 700388 / DSM 13276 / CCUG 48851 / CIP 106301 / E264).